The chain runs to 612 residues: MFS siderochrome iron transporter B (612 aa).

The Cytoplasmic portion of the chain corresponds to methionine 1–glutamate 86. Positions aspartate 55–alanine 78 are disordered. A compositionally biased stretch (low complexity) spans histidine 60–alanine 72. A helical membrane pass occupies residues alanine 87 to valine 104. At asparagine 105–serine 127 the chain is on the extracellular side. Residues leucine 128–alanine 148 traverse the membrane as a helical segment. The Cytoplasmic portion of the chain corresponds to lysine 149–arginine 156. The chain crosses the membrane as a helical span at residues alanine 157–serine 177. At glutamine 178–glutamine 187 the chain is on the extracellular side. The helical transmembrane segment at valine 188–valine 208 threads the bilayer. Residues threonine 209–glycine 215 are Cytoplasmic-facing. The helical transmembrane segment at leucine 216–alanine 236 threads the bilayer. Residues serine 237–arginine 246 are Extracellular-facing. The helical transmembrane segment at tryptophan 247–leucine 267 threads the bilayer. Topologically, residues alanine 268–aspartate 302 are cytoplasmic. A helical transmembrane segment spans residues leucine 303–alanine 323. Residues alanine 324 to tyrosine 334 lie on the Extracellular side of the membrane. A helical membrane pass occupies residues isoleucine 335 to leucine 355. Topologically, residues valine 356 to arginine 370 are cytoplasmic. Residues threonine 371–leucine 393 form a helical membrane-spanning segment. Residues proline 394–glycine 409 are Extracellular-facing. A helical transmembrane segment spans residues tyrosine 410–isoleucine 430. The Cytoplasmic portion of the chain corresponds to arginine 431 to arginine 435. A helical transmembrane segment spans residues phenylalanine 436–histidine 456. Residues phenylalanine 457–tyrosine 463 lie on the Extracellular side of the membrane. Residues isoleucine 464–cysteine 484 traverse the membrane as a helical segment. The Cytoplasmic segment spans residues valine 485–valine 498. Residues alanine 499 to isoleucine 519 traverse the membrane as a helical segment. Topologically, residues cysteine 520–glutamine 575 are extracellular. A helical transmembrane segment spans residues alanine 576–methionine 596. The Cytoplasmic portion of the chain corresponds to arginine 597–valine 612.

It belongs to the major facilitator superfamily.

It is found in the cell tip. The protein resides in the cytoplasmic vesicle membrane. It localises to the cell membrane. Major facilitator transporter involved in triacetylfusarinine C (TAFC) uptake. Can also transport ferricrocin and coprogen, but not ferrichrysin. MirB plays a crucial role for virulence in a murine model of pulmonary aspergillosis, indicating that TAFC-mediated iron uptake plays a dominant role during infection. The chain is MFS siderochrome iron transporter B from Aspergillus fumigatus (strain ATCC MYA-4609 / CBS 101355 / FGSC A1100 / Af293) (Neosartorya fumigata).